Consider the following 191-residue polypeptide: MSKNQLPSYQVVADEMKMATLAVTPAELHGLLAGLISGGLSQQDQSWQPMLFDYTNDGMGWPSAALEQAQALFNVTSAQLTSDEMVLNLLLPNAEGEEAIFALADALSDWVNHYISGLGLAGAAFNKASEEAKEALADLEEMARLGVDEDDDLQEQAELLEQVIEHVKACTLLIHAEFGAKTSSSETPTIH.

It belongs to the UPF0149 family.

This is UPF0149 protein VV1_1551 from Vibrio vulnificus (strain CMCP6).